We begin with the raw amino-acid sequence, 266 residues long: Calpain small subunit 1 (266 aa).

At Met1 the chain carries N-acetylmethionine. Ser6 bears the Phosphoserine mark. Residues 94–128 (EEVRQFRRLFAQLAGDDMEVSATELMNILNKVVTR) enclose the EF-hand 1; atypical domain. Residues Ala107, Asp110, Glu112, Glu117, Asp135, Asp150, Asp152, Thr154, Lys156, and Glu161 each coordinate Ca(2+). 4 EF-hand domains span residues 137-170 (FGIDTCRSMVAVMDSDTTGKLGFEEFKYLWNNIK), 167-202 (NNIKKWQAIYKQFDVDRSGTIGSSELPGAFEAAGFH), 203-231 (LNEHLYSMIIRRYSDEGGNMDFDNFISCL), and 232-266 (VRLDAMFRAFKSLDKDGTGQIQVNIQEWLQLTMYS). Lys177 is subject to N6-acetyllysine. The Ca(2+) site is built by Asp180, Asp182, Ser184, Thr186, Glu191, and Asp223.

Homodimer or heterodimer of a large (catalytic) and a small (regulatory) subunit. In presence of calcium, the heterodimer dissociates.

It localises to the cytoplasm. The protein resides in the cell membrane. In terms of biological role, regulatory subunit of the calcium-regulated non-lysosomal thiol-protease which catalyzes limited proteolysis of substrates involved in cytoskeletal remodeling and signal transduction. Essential for embryonic development. This Sus scrofa (Pig) protein is Calpain small subunit 1 (CAPNS1).